The chain runs to 380 residues: Cell division protein FtsZ (380 aa).

GTP is bound by residues Gly-27–Asn-31, Gly-119–Gly-121, Glu-150, and Asn-189.

This sequence belongs to the FtsZ family. As to quaternary structure, homodimer. Polymerizes to form a dynamic ring structure in a strictly GTP-dependent manner. Interacts directly with several other division proteins.

The protein localises to the cytoplasm. Its function is as follows. Essential cell division protein that forms a contractile ring structure (Z ring) at the future cell division site. The regulation of the ring assembly controls the timing and the location of cell division. One of the functions of the FtsZ ring is to recruit other cell division proteins to the septum to produce a new cell wall between the dividing cells. Binds GTP and shows GTPase activity. The protein is Cell division protein FtsZ of Mycoplasma pneumoniae (strain ATCC 29342 / M129 / Subtype 1) (Mycoplasmoides pneumoniae).